Reading from the N-terminus, the 243-residue chain is Retrotransposon Gag-like protein 6 (243 aa).

Residues 1 to 12 (MVQPRTSKTESP) are compositionally biased toward polar residues. Residues 1–22 (MVQPRTSKTESPASAPGASAQM) form a disordered region. Residues 29–69 (LTSLRLTNSALRREASTLRAEKANLTNMLESVMAELTLLRT) are a coiled coil. Disordered stretches follow at residues 84-105 (SAIT…PEPF) and 218-243 (TGSC…GRNL). The span at 85–94 (AITSNGTRPM) shows a compositional bias: polar residues.

Belongs to the LDOC1 family. In terms of tissue distribution, widely expressed.

This chain is Retrotransposon Gag-like protein 6, found in Mus musculus (Mouse).